We begin with the raw amino-acid sequence, 132 residues long: Fluoride-specific ion channel FluC (132 aa).

4 helical membrane passes run 5-25 (LVAI…LGMW), 36-56 (GTLA…ALFA), 68-88 (FVVT…AEMF), and 103-123 (IAVH…TFGA). The Na(+) site is built by glycine 75 and threonine 78.

This sequence belongs to the fluoride channel Fluc/FEX (TC 1.A.43) family.

It localises to the cell inner membrane. The enzyme catalyses fluoride(in) = fluoride(out). With respect to regulation, na(+) is not transported, but it plays an essential structural role and its presence is essential for fluoride channel function. Functionally, fluoride-specific ion channel. Important for reducing fluoride concentration in the cell, thus reducing its toxicity. This chain is Fluoride-specific ion channel FluC, found in Chromohalobacter salexigens (strain ATCC BAA-138 / DSM 3043 / CIP 106854 / NCIMB 13768 / 1H11).